The following is a 476-amino-acid chain: Glycogen synthase (476 aa).

Residue K15 coordinates ADP-alpha-D-glucose.

Belongs to the glycosyltransferase 1 family. Bacterial/plant glycogen synthase subfamily.

The catalysed reaction is [(1-&gt;4)-alpha-D-glucosyl](n) + ADP-alpha-D-glucose = [(1-&gt;4)-alpha-D-glucosyl](n+1) + ADP + H(+). The protein operates within glycan biosynthesis; glycogen biosynthesis. In terms of biological role, synthesizes alpha-1,4-glucan chains using ADP-glucose. The chain is Glycogen synthase from Bacillus cereus (strain ZK / E33L).